The following is a 317-amino-acid chain: Beta-ketoacyl-[acyl-carrier-protein] synthase III (317 aa).

Residues Cys112 and His244 contribute to the active site. The interval 245–249 (QANLR) is ACP-binding. Asn274 is a catalytic residue.

The protein belongs to the thiolase-like superfamily. FabH family. Homodimer.

Its subcellular location is the cytoplasm. It carries out the reaction malonyl-[ACP] + acetyl-CoA + H(+) = 3-oxobutanoyl-[ACP] + CO2 + CoA. The protein operates within lipid metabolism; fatty acid biosynthesis. Its function is as follows. Catalyzes the condensation reaction of fatty acid synthesis by the addition to an acyl acceptor of two carbons from malonyl-ACP. Catalyzes the first condensation reaction which initiates fatty acid synthesis and may therefore play a role in governing the total rate of fatty acid production. Possesses both acetoacetyl-ACP synthase and acetyl transacylase activities. Its substrate specificity determines the biosynthesis of branched-chain and/or straight-chain of fatty acids. The protein is Beta-ketoacyl-[acyl-carrier-protein] synthase III of Salmonella typhi.